The following is a 307-amino-acid chain: Ribosomal RNA small subunit methyltransferase H (307 aa).

S-adenosyl-L-methionine contacts are provided by residues Ala-32–His-34, Asp-51, Ile-82, Asp-99, and Gln-106.

The protein belongs to the methyltransferase superfamily. RsmH family.

It localises to the cytoplasm. It carries out the reaction cytidine(1402) in 16S rRNA + S-adenosyl-L-methionine = N(4)-methylcytidine(1402) in 16S rRNA + S-adenosyl-L-homocysteine + H(+). In terms of biological role, specifically methylates the N4 position of cytidine in position 1402 (C1402) of 16S rRNA. In Campylobacter concisus (strain 13826), this protein is Ribosomal RNA small subunit methyltransferase H.